The primary structure comprises 65 residues: Potassium channel toxin kappa-KTx 2.7 (65 aa).

A signal peptide spans 1 to 26; sequence MKTSGTVYVFLLLLAFGIFTDISSAC. Residues 27–39 constitute a propeptide that is removed on maturation; it reads SEQMDDEDSYEVE. 2 disulfide bridges follow: Cys45-Cys63 and Cys49-Cys59.

It belongs to the short scorpion toxin superfamily. Potassium channel inhibitor kappa-KTx family. Kappa-KTx 2 subfamily. In terms of tissue distribution, expressed by the venom gland.

The protein localises to the secreted. Functionally, weakly inhibits the Kv7.1/KCNQ1 channel (10 uM of the toxin inhibits currents by 17.8%). The chain is Potassium channel toxin kappa-KTx 2.7 from Heterometrus petersii (Asian forest scorpion).